Here is a 323-residue protein sequence, read N- to C-terminus: D-specific alpha-keto acid dehydrogenase (323 aa).

NAD(+)-binding positions include 157–158 (HI), 230–232 (TGR), and aspartate 256. Arginine 232 is an active-site residue. Residue glutamate 261 is part of the active site. Histidine 293 (proton donor) is an active-site residue. NAD(+) is bound at residue 293–296 (HTAY).

It belongs to the D-isomer specific 2-hydroxyacid dehydrogenase family.

Required for high-level resistance to glycopeptides antibiotics. Catalyzes the reduction of 2-keto acids to 2-D-hydroxy acids that give rise to peptidoglycan precursors that terminate in the depsipeptide D-alanine-2-lactate rather than the dipeptide D-alanine-D-alanine thus preventing vancomycin binding. The polypeptide is D-specific alpha-keto acid dehydrogenase (vanHB) (Enterococcus faecalis (strain ATCC 700802 / V583)).